The chain runs to 124 residues: Small ribosomal subunit protein uS12 (124 aa).

3-methylthioaspartic acid is present on Asp-89. The disordered stretch occupies residues 101–124 (TLDTSGVKDRRQSRSKYGAKAPKE).

This sequence belongs to the universal ribosomal protein uS12 family. Part of the 30S ribosomal subunit. Contacts proteins S8 and S17. May interact with IF1 in the 30S initiation complex.

In terms of biological role, with S4 and S5 plays an important role in translational accuracy. Its function is as follows. Interacts with and stabilizes bases of the 16S rRNA that are involved in tRNA selection in the A site and with the mRNA backbone. Located at the interface of the 30S and 50S subunits, it traverses the body of the 30S subunit contacting proteins on the other side and probably holding the rRNA structure together. The combined cluster of proteins S8, S12 and S17 appears to hold together the shoulder and platform of the 30S subunit. In Synechococcus sp. (strain CC9902), this protein is Small ribosomal subunit protein uS12.